The following is a 143-amino-acid chain: WW domain-containing protein C660.05 (143 aa).

The region spanning 9–44 (GLPAGWVAQWDPTYQAYFYINETFEGAQPQWEPPIP) is the WW domain. The interval 115–143 (HHGPLHGPHGGFGGRGGGRMGGRGGRGRR) is disordered.

This Schizosaccharomyces pombe (strain 972 / ATCC 24843) (Fission yeast) protein is WW domain-containing protein C660.05.